An 831-amino-acid chain; its full sequence is Zinc transporter ZIP10 (831 aa).

Positions 1-25 (MKVHMHTKFCLICLLTFIFHHCNHC) are cleaved as a signal peptide. The segment at 126–318 (HNHQHSHNHL…RKREAPHVKN (193 aa)) is disordered. The span at 138-147 (ENQTVTSVST) shows a compositional bias: polar residues. Asn139 carries N-linked (GlcNAc...) asparagine glycosylation. The span at 152–171 (KCDPEKETVEVSVKSDDKHM) shows a compositional bias: basic and acidic residues. The span at 172-188 (HDHNHRLRHHHRLHHHL) shows a compositional bias: basic residues. Basic and acidic residues predominate over residues 189–198 (DHNNTHHFHN). Residues Asn198 and Asn218 are each glycosylated (N-linked (GlcNAc...) asparagine). Residues 211–221 (NEPSTETNKTQ) show a composition bias toward polar residues. The segment covering 229 to 238 (PKGKRKKKGR) has biased composition (basic residues). Basic and acidic residues-rich tracts occupy residues 256-273 (DQGEQYEHNRVHKPDRVH) and 281-315 (HLPERNGHDPGRGHQDLDPDNEGELRHTRKREAPH). The N-linked (GlcNAc...) asparagine glycan is linked to Asn339. 2 consecutive transmembrane segments (helical) span residues 411–431 (IISITVISLLSLLGVILVPII) and 438–458 (FLLTFLVALAVGTMSGDALLH). Residues 464–484 (QGGHDHSHQHAHGHGHSHGHE) are disordered. Residues 495–515 (VLKGLVALGGIYLLFIIEHCI) traverse the membrane as a helical segment. Phosphothreonine is present on residues Thr536 and Thr553. Residue Ser591 is modified to Phosphoserine. The next 4 membrane-spanning stretches (helical) occupy residues 687–707 (AIGAAFSAGLTGGISTSIAVF), 732–752 (IVYNLLSAMMAYIGMLIGTAV), 759–779 (ITLWIFAVTAGMFLYVALVDM), and 801–821 (FILQNLGLLFGFAIMLVIALY).

It belongs to the ZIP transporter (TC 2.A.5) family. As to quaternary structure, interacts with SLC39A6; which triggers cells to undergo EMT and mitosis. Found in a complex with SLC39A6, SLC39A10 and with the 'Ser-727' phosphorylated form of STAT3 throughout mitosis. Found in a complex with SLC39A6, SLC39A10 and with NCAM1; this complex controls NCAM1 phosphorylation and integration into focal adhesion complexes during epithelial-tomesenchymal transition. Found in a complex with SLC39A6, SLC39A10 and with GSK3B that controls NCAM1 phosphorylation. Undergoes N-terminal ectodomain shedding.

Its subcellular location is the cell membrane. It localises to the apical cell membrane. The catalysed reaction is Zn(2+)(in) = Zn(2+)(out). Functionally, zinc-influx transporter. When associated with SLC39A6, the heterodimer formed by SLC39A10 and SLC39A6 mediates cellular zinc uptake to trigger cells to undergo epithelial-to-mesenchymal transition (EMT). SLC39A10-SLC39A6 heterodimers play also an essentiel role in initiating mitosis by importing zinc into cells to initiate a pathway resulting in the onset of mitosis. Plays an important for both mature B-cell maintenance and humoral immune responses. When associated with SLC39A10, the heterodimer controls NCAM1 phosphorylation and integration into focal adhesion complexes during EMT. This Homo sapiens (Human) protein is Zinc transporter ZIP10.